The chain runs to 430 residues: Adenylosuccinate synthetase (430 aa).

Residues glycine 13–lysine 19 and glycine 41–threonine 43 contribute to the GTP site. The Proton acceptor role is filled by aspartate 14. The Mg(2+) site is built by aspartate 14 and glycine 41. IMP is bound by residues aspartate 14 to lysine 17, asparagine 39 to histidine 42, threonine 130, arginine 144, glutamine 225, threonine 240, and arginine 304. Histidine 42 (proton donor) is an active-site residue. Residue alanine 300–arginine 306 participates in substrate binding. GTP contacts are provided by residues arginine 306, lysine 332–aspartate 334, and serine 414–glycine 416.

It belongs to the adenylosuccinate synthetase family. In terms of assembly, homodimer. Mg(2+) serves as cofactor.

The protein localises to the cytoplasm. The enzyme catalyses IMP + L-aspartate + GTP = N(6)-(1,2-dicarboxyethyl)-AMP + GDP + phosphate + 2 H(+). Its pathway is purine metabolism; AMP biosynthesis via de novo pathway; AMP from IMP: step 1/2. Functionally, plays an important role in the de novo pathway of purine nucleotide biosynthesis. Catalyzes the first committed step in the biosynthesis of AMP from IMP. The polypeptide is Adenylosuccinate synthetase (Stenotrophomonas maltophilia (strain R551-3)).